The sequence spans 251 residues: 5'-nucleotidase SurE (251 aa).

A divalent metal cation is bound by residues D9, D10, S40, and N94.

It belongs to the SurE nucleotidase family. A divalent metal cation serves as cofactor.

It is found in the cytoplasm. The catalysed reaction is a ribonucleoside 5'-phosphate + H2O = a ribonucleoside + phosphate. Its function is as follows. Nucleotidase that shows phosphatase activity on nucleoside 5'-monophosphates. This Aquifex aeolicus (strain VF5) protein is 5'-nucleotidase SurE.